A 131-amino-acid polypeptide reads, in one-letter code: UPF0102 protein H16_A3579 (131 aa).

The protein belongs to the UPF0102 family.

This is UPF0102 protein H16_A3579 from Cupriavidus necator (strain ATCC 17699 / DSM 428 / KCTC 22496 / NCIMB 10442 / H16 / Stanier 337) (Ralstonia eutropha).